The chain runs to 636 residues: 1-deoxy-D-xylulose-5-phosphate synthase (636 aa).

Residues His-73 and 114–116 (SHA) each bind thiamine diphosphate. Asp-146 contacts Mg(2+). Residues 147-148 (GA), Asn-176, Tyr-287, and Glu-368 each bind thiamine diphosphate. Asn-176 is a Mg(2+) binding site.

Belongs to the transketolase family. DXPS subfamily. Homodimer. It depends on Mg(2+) as a cofactor. Requires thiamine diphosphate as cofactor.

It carries out the reaction D-glyceraldehyde 3-phosphate + pyruvate + H(+) = 1-deoxy-D-xylulose 5-phosphate + CO2. The protein operates within metabolic intermediate biosynthesis; 1-deoxy-D-xylulose 5-phosphate biosynthesis; 1-deoxy-D-xylulose 5-phosphate from D-glyceraldehyde 3-phosphate and pyruvate: step 1/1. Catalyzes the acyloin condensation reaction between C atoms 2 and 3 of pyruvate and glyceraldehyde 3-phosphate to yield 1-deoxy-D-xylulose-5-phosphate (DXP). The chain is 1-deoxy-D-xylulose-5-phosphate synthase from Corynebacterium glutamicum (strain ATCC 13032 / DSM 20300 / JCM 1318 / BCRC 11384 / CCUG 27702 / LMG 3730 / NBRC 12168 / NCIMB 10025 / NRRL B-2784 / 534).